Here is a 728-residue protein sequence, read N- to C-terminus: Catalase-peroxidase 1 (728 aa).

Positions 91–218 form a cross-link, tryptophyl-tyrosyl-methioninium (Trp-Tyr) (with M-244); that stretch reads WHSAGTYRTA…LAAVQMGLIY (128 aa). His92 serves as the catalytic Proton acceptor. Positions 218–244 form a cross-link, tryptophyl-tyrosyl-methioninium (Tyr-Met) (with W-91); that stretch reads YVNPEGPDGNPDPVAAAHDIRETFARM. Heme b is bound at residue His259.

The protein belongs to the peroxidase family. Peroxidase/catalase subfamily. As to quaternary structure, homodimer or homotetramer. Heme b serves as cofactor. Formation of the three residue Trp-Tyr-Met cross-link is important for the catalase, but not the peroxidase activity of the enzyme.

The enzyme catalyses H2O2 + AH2 = A + 2 H2O. It catalyses the reaction 2 H2O2 = O2 + 2 H2O. In terms of biological role, bifunctional enzyme with both catalase and broad-spectrum peroxidase activity. This is Catalase-peroxidase 1 from Burkholderia cenocepacia (strain HI2424).